The sequence spans 459 residues: tRNA(Ile2) 2-agmatinylcytidine synthetase TiaS (459 aa).

A DNA-binding region (OB) is located at residues valine 282–isoleucine 360.

The protein belongs to the TiaS family.

Its subcellular location is the cytoplasm. The enzyme catalyses cytidine(34) in tRNA(Ile2) + agmatine + ATP + H2O = 2-agmatinylcytidine(34) in tRNA(Ile2) + AMP + 2 phosphate + 2 H(+). Functionally, ATP-dependent agmatine transferase that catalyzes the formation of 2-agmatinylcytidine (agm2C) at the wobble position (C34) of tRNA(Ile2), converting the codon specificity from AUG to AUA. The chain is tRNA(Ile2) 2-agmatinylcytidine synthetase TiaS from Staphylothermus marinus (strain ATCC 43588 / DSM 3639 / JCM 9404 / F1).